A 92-amino-acid polypeptide reads, in one-letter code: Small ribosomal subunit protein bS21A (92 aa).

Positions 25–52 (GVFREMKQRRSYEKPSERKTREKSEAIR) are enriched in basic and acidic residues. The disordered stretch occupies residues 25–92 (GVFREMKQRR…LPQTAARPAG (68 aa)).

This sequence belongs to the bacterial ribosomal protein bS21 family.

This Bradyrhizobium diazoefficiens (strain JCM 10833 / BCRC 13528 / IAM 13628 / NBRC 14792 / USDA 110) protein is Small ribosomal subunit protein bS21A.